The following is a 508-amino-acid chain: Glycerol kinase (508 aa).

Position 14 (T14) interacts with ADP. Residues T14, T15, and S16 each coordinate ATP. A sn-glycerol 3-phosphate-binding site is contributed by T14. R18 is a binding site for ADP. The sn-glycerol 3-phosphate site is built by R84, E85, Y136, and D245. Glycerol is bound by residues R84, E85, Y136, D245, and Q246. 2 residues coordinate ADP: T267 and G314. The ATP site is built by T267, G314, and Q318. N419 contributes to the ADP binding site.

The protein belongs to the FGGY kinase family.

The catalysed reaction is glycerol + ATP = sn-glycerol 3-phosphate + ADP + H(+). It participates in polyol metabolism; glycerol degradation via glycerol kinase pathway; sn-glycerol 3-phosphate from glycerol: step 1/1. With respect to regulation, inhibited by fructose 1,6-bisphosphate (FBP). Its function is as follows. Key enzyme in the regulation of glycerol uptake and metabolism. Catalyzes the phosphorylation of glycerol to yield sn-glycerol 3-phosphate. The sequence is that of Glycerol kinase from Bordetella pertussis (strain Tohama I / ATCC BAA-589 / NCTC 13251).